Reading from the N-terminus, the 667-residue chain is tRNA 5-methylaminomethyl-2-thiouridine biosynthesis bifunctional protein MnmC (667 aa).

Residues 1-241 (MHKLTFAQLS…KREMLCGEKA (241 aa)) are tRNA (mnm(5)s(2)U34)-methyltransferase. The segment at 268–667 (VGGGIASLFV…RKWLKGSKVV (400 aa)) is FAD-dependent cmnm(5)s(2)U34 oxidoreductase.

It in the N-terminal section; belongs to the methyltransferase superfamily. tRNA (mnm(5)s(2)U34)-methyltransferase family. The protein in the C-terminal section; belongs to the DAO family. The cofactor is FAD.

It localises to the cytoplasm. It catalyses the reaction 5-aminomethyl-2-thiouridine(34) in tRNA + S-adenosyl-L-methionine = 5-methylaminomethyl-2-thiouridine(34) in tRNA + S-adenosyl-L-homocysteine + H(+). Its function is as follows. Catalyzes the last two steps in the biosynthesis of 5-methylaminomethyl-2-thiouridine (mnm(5)s(2)U) at the wobble position (U34) in tRNA. Catalyzes the FAD-dependent demodification of cmnm(5)s(2)U34 to nm(5)s(2)U34, followed by the transfer of a methyl group from S-adenosyl-L-methionine to nm(5)s(2)U34, to form mnm(5)s(2)U34. The chain is tRNA 5-methylaminomethyl-2-thiouridine biosynthesis bifunctional protein MnmC from Haemophilus ducreyi (strain 35000HP / ATCC 700724).